The sequence spans 527 residues: Bifunctional purine biosynthesis protein PurH (527 aa).

In terms of domain architecture, MGS-like spans 8–156 (AGAKRPIRRA…KNHPSVAVVV (149 aa)).

It belongs to the PurH family.

It carries out the reaction (6R)-10-formyltetrahydrofolate + 5-amino-1-(5-phospho-beta-D-ribosyl)imidazole-4-carboxamide = 5-formamido-1-(5-phospho-D-ribosyl)imidazole-4-carboxamide + (6S)-5,6,7,8-tetrahydrofolate. It catalyses the reaction IMP + H2O = 5-formamido-1-(5-phospho-D-ribosyl)imidazole-4-carboxamide. It functions in the pathway purine metabolism; IMP biosynthesis via de novo pathway; 5-formamido-1-(5-phospho-D-ribosyl)imidazole-4-carboxamide from 5-amino-1-(5-phospho-D-ribosyl)imidazole-4-carboxamide (10-formyl THF route): step 1/1. The protein operates within purine metabolism; IMP biosynthesis via de novo pathway; IMP from 5-formamido-1-(5-phospho-D-ribosyl)imidazole-4-carboxamide: step 1/1. The chain is Bifunctional purine biosynthesis protein PurH from Mycobacterium sp. (strain JLS).